The primary structure comprises 511 residues: 2-isopropylmalate synthase (511 aa).

In terms of domain architecture, Pyruvate carboxyltransferase spans 4–266; sequence IRIFDTTLRD…ETGIDLSQLY (263 aa). The Mn(2+) site is built by D13, H201, H203, and N237. The tract at residues 391 to 511 is regulatory domain; it reads VLEKIRVVSG…IAANARAQKN (121 aa).

The protein belongs to the alpha-IPM synthase/homocitrate synthase family. LeuA type 1 subfamily. As to quaternary structure, homodimer. It depends on Mn(2+) as a cofactor.

Its subcellular location is the cytoplasm. The catalysed reaction is 3-methyl-2-oxobutanoate + acetyl-CoA + H2O = (2S)-2-isopropylmalate + CoA + H(+). Its pathway is amino-acid biosynthesis; L-leucine biosynthesis; L-leucine from 3-methyl-2-oxobutanoate: step 1/4. Its function is as follows. Catalyzes the condensation of the acetyl group of acetyl-CoA with 3-methyl-2-oxobutanoate (2-ketoisovalerate) to form 3-carboxy-3-hydroxy-4-methylpentanoate (2-isopropylmalate). The protein is 2-isopropylmalate synthase of Acetivibrio thermocellus (strain ATCC 27405 / DSM 1237 / JCM 9322 / NBRC 103400 / NCIMB 10682 / NRRL B-4536 / VPI 7372) (Clostridium thermocellum).